The chain runs to 555 residues: Glutamine--tRNA ligase (555 aa).

A 'HIGH' region motif is present at residues 34-44; the sequence is PEPNGYLHIGH. Residues 35 to 37 and 41 to 47 each bind ATP; these read EPN and HIGHAKS. The L-glutamine site is built by Asp67 and Tyr212. Residues Thr231, 261–262, and 269–271 each bind ATP; these read RL and MSK. A 'KMSKS' region motif is present at residues 268 to 272; that stretch reads VMSKR. An interaction with tRNA region spans residues 317 to 324; the sequence is TKQDNTIE.

This sequence belongs to the class-I aminoacyl-tRNA synthetase family. In terms of assembly, monomer.

Its subcellular location is the cytoplasm. It catalyses the reaction tRNA(Gln) + L-glutamine + ATP = L-glutaminyl-tRNA(Gln) + AMP + diphosphate. The protein is Glutamine--tRNA ligase of Enterobacter sp. (strain 638).